An 85-amino-acid polypeptide reads, in one-letter code: MKVTLIAILTCAAVLVLHTTAAEELEAESQLMEVGMPDTELAAVDEERHFECSVSCEIEKEGNKDCKKKKCKGGWKCKFNMCVKV.

The signal sequence occupies residues 1–22 (MKVTLIAILTCAAVLVLHTTAA). A propeptide spanning residues 23–48 (EELEAESQLMEVGMPDTELAAVDEER) is cleaved from the precursor. 3 disulfide bridges follow: C52/C66, C56/C77, and C71/C82.

It belongs to the neurotoxin 12 (Hwtx-2) family. 02 (Hwtx-2) subfamily. As to expression, expressed by the venom gland.

The protein resides in the secreted. Postsynaptic neurotoxin. This is U4-theraphotoxin-Hhn1o from Cyriopagopus hainanus (Chinese bird spider).